The chain runs to 150 residues: MLEVNILDKKWCSIIENPKNFVLGVINASLKELKIDHYKPNISIALADDDLLHQLNLKFREMDKPTNVLSFPYEQLSNECDLGDIAISIDTIKRESHEYYIPILAHIAHMLVHGLLHLLGYDHQKKDEEIIMKNLEREILASLGYNMCAI.

H113, H117, and H123 together coordinate Zn(2+).

The protein belongs to the endoribonuclease YbeY family. Zn(2+) is required as a cofactor.

It is found in the cytoplasm. Single strand-specific metallo-endoribonuclease involved in late-stage 70S ribosome quality control and in maturation of the 3' terminus of the 16S rRNA. The protein is Endoribonuclease YbeY of Wolbachia sp. subsp. Drosophila simulans (strain wRi).